Consider the following 202-residue polypeptide: NADH-quinone oxidoreductase subunit C (202 aa).

This sequence belongs to the complex I 30 kDa subunit family. In terms of assembly, NDH-1 is composed of 14 different subunits. Subunits NuoB, C, D, E, F, and G constitute the peripheral sector of the complex.

It is found in the cell inner membrane. It catalyses the reaction a quinone + NADH + 5 H(+)(in) = a quinol + NAD(+) + 4 H(+)(out). Its function is as follows. NDH-1 shuttles electrons from NADH, via FMN and iron-sulfur (Fe-S) centers, to quinones in the respiratory chain. The immediate electron acceptor for the enzyme in this species is believed to be ubiquinone. Couples the redox reaction to proton translocation (for every two electrons transferred, four hydrogen ions are translocated across the cytoplasmic membrane), and thus conserves the redox energy in a proton gradient. This chain is NADH-quinone oxidoreductase subunit C, found in Bartonella henselae (strain ATCC 49882 / DSM 28221 / CCUG 30454 / Houston 1) (Rochalimaea henselae).